We begin with the raw amino-acid sequence, 180 residues long: MINSTIAKRYALSLVQLGAECGLVDRFRGELADVEDLFGTTPEIPAAFADPALSHERKKNIMRELVGSCACSELMGNFLLLLVDKNRVAFFSQIVKAYGQLADEHVGILRPVITTAFELDAVQLAAIREALEKKSAKTIIPQLTVDKAFLGGVVVQIGDTVYDSSVKTQLKRIQDQLQKG.

It belongs to the ATPase delta chain family. F-type ATPases have 2 components, F(1) - the catalytic core - and F(0) - the membrane proton channel. F(1) has five subunits: alpha(3), beta(3), gamma(1), delta(1), epsilon(1). F(0) has three main subunits: a(1), b(2) and c(10-14). The alpha and beta chains form an alternating ring which encloses part of the gamma chain. F(1) is attached to F(0) by a central stalk formed by the gamma and epsilon chains, while a peripheral stalk is formed by the delta and b chains.

It localises to the cell inner membrane. Functionally, f(1)F(0) ATP synthase produces ATP from ADP in the presence of a proton or sodium gradient. F-type ATPases consist of two structural domains, F(1) containing the extramembraneous catalytic core and F(0) containing the membrane proton channel, linked together by a central stalk and a peripheral stalk. During catalysis, ATP synthesis in the catalytic domain of F(1) is coupled via a rotary mechanism of the central stalk subunits to proton translocation. This protein is part of the stalk that links CF(0) to CF(1). It either transmits conformational changes from CF(0) to CF(1) or is implicated in proton conduction. The sequence is that of ATP synthase subunit delta from Pelobacter propionicus (strain DSM 2379 / NBRC 103807 / OttBd1).